Reading from the N-terminus, the 335-residue chain is Protein CBP3, mitochondrial (335 aa).

A mitochondrion-targeting transit peptide spans 1 to 38 (MMSVNRFTSGRLPVFLRKSPFYYSRAYLHQTCVFKQNK). A helical transmembrane segment spans residues 152–169 (TFSQWFQITVLHEWILFV).

This sequence belongs to the CBP3 family.

Its subcellular location is the mitochondrion membrane. Chaperone required for the assembly of ubiquinol-cytochrome c reductase of the mitochondrial respiratory chain. The protein is Protein CBP3, mitochondrial (CBP3) of Saccharomyces cerevisiae (strain ATCC 204508 / S288c) (Baker's yeast).